A 60-amino-acid polypeptide reads, in one-letter code: UPF0181 protein PMI1604 (60 aa).

It belongs to the UPF0181 family.

This is UPF0181 protein PMI1604 from Proteus mirabilis (strain HI4320).